Here is an 89-residue protein sequence, read N- to C-terminus: Small ribosomal subunit protein uS15 (89 aa).

It belongs to the universal ribosomal protein uS15 family. In terms of assembly, part of the 30S ribosomal subunit. Forms a bridge to the 50S subunit in the 70S ribosome, contacting the 23S rRNA.

Functionally, one of the primary rRNA binding proteins, it binds directly to 16S rRNA where it helps nucleate assembly of the platform of the 30S subunit by binding and bridging several RNA helices of the 16S rRNA. Forms an intersubunit bridge (bridge B4) with the 23S rRNA of the 50S subunit in the ribosome. This is Small ribosomal subunit protein uS15 from Marinomonas sp. (strain MWYL1).